Here is a 603-residue protein sequence, read N- to C-terminus: Aspartate--tRNA(Asp/Asn) ligase (603 aa).

Position 182 (Glu-182) interacts with L-aspartate. Positions 206-209 (QLFK) are aspartate. Arg-228 lines the L-aspartate pocket. ATP is bound by residues 228–230 (RDE) and Gln-237. An L-aspartate-binding site is contributed by His-454. Glu-500 provides a ligand contact to ATP. Arg-507 is a binding site for L-aspartate. 552 to 555 (GLDR) contributes to the ATP binding site.

This sequence belongs to the class-II aminoacyl-tRNA synthetase family. Type 1 subfamily. Homodimer.

The protein localises to the cytoplasm. It catalyses the reaction tRNA(Asx) + L-aspartate + ATP = L-aspartyl-tRNA(Asx) + AMP + diphosphate. Functionally, aspartyl-tRNA synthetase with relaxed tRNA specificity since it is able to aspartylate not only its cognate tRNA(Asp) but also tRNA(Asn). Reaction proceeds in two steps: L-aspartate is first activated by ATP to form Asp-AMP and then transferred to the acceptor end of tRNA(Asp/Asn). This Aquifex aeolicus (strain VF5) protein is Aspartate--tRNA(Asp/Asn) ligase.